A 104-amino-acid polypeptide reads, in one-letter code: Circadian clock oscillator protein KaiB (104 aa).

This sequence belongs to the KaiB family. The KaiABC complex composition changes during the circadian cycle to control KaiC phosphorylation. Complexes KaiC(6), KaiA(2-4):KaiC(6), KaiB(6):KaiC(6) and KaiC(6):KaiB(6):KaiA(12) are among the most important forms, many form cooperatively. Undergoes a major conformational rearrangment; in the free state forms homotetramers as a dimer of dimers. When bound to the CI domain of KaiC switches to a monomeric thioredoxin-fold (KaiB(fs)). KaiB(fs) binds CikA, leading it to dephosphorylate phospho-RpaA.

Its function is as follows. Key component of the KaiABC oscillator complex, which constitutes the main circadian regulator in cyanobacteria. Complex composition changes during the circadian cycle to control KaiC phosphorylation. KaiA stimulates KaiC autophosphorylation, while KaiB sequesters KaiA, leading to KaiC autodephosphorylation. Phospho-Ser-431 KaiC accumulation triggers binding of KaiB to form the KaiB(6):KaiC(6) complex, leading to changes in output regulators CikA and SasA. KaiB switches to a thioredoxin-like fold (KaiB(fs)) when bound to KaiC. KaiB(6):KaiC(6) formation exposes a site for KaiA binding that sequesters KaiA from KaiC, making the KaiC(6):KaiB(6):KaiA(12) complex that results in KaiC autodephosphorylation. Functionally, a metamorphic protein which reversibly switches between an inactive tetrameric fold and a rare, thioredoxin-like monomeric fold (KaiB(fs)). KaiB(fs) binds phospho-KaiC, KaiA and CikA. KaiA and CikA compete for binding to KaiB(fs), and KaiB(fs) and SasA compete for binding to KaiC, thus the clock oscillator and output signal pathway are tightly coupled. This is Circadian clock oscillator protein KaiB from Rippkaea orientalis (strain PCC 8801 / RF-1) (Cyanothece sp. (strain PCC 8801)).